Consider the following 467-residue polypeptide: Receptor-like cytosolic serine/threonine-protein kinase RBK1 (467 aa).

Positions 1-24 (MAVEDNKNSESKNHQEVELHRNDL) are enriched in basic and acidic residues. Residues 1–73 (MAVEDNKNSE…PFSNTTKTVS (73 aa)) are disordered. The segment covering 40 to 71 (SDSDNSSSSCSSCSSDDKSSSTSSPFSNTTKT) has biased composition (low complexity). T142 carries the post-translational modification Phosphothreonine. The Protein kinase domain occupies 153–430 (FNPENMIGKG…LRGEDGPAEL (278 aa)). ATP is bound by residues 159–167 (IGKGGHAEV) and K181. D278 acts as the Proton acceptor in catalysis. Phosphoserine is present on S282. A Phosphothreonine modification is found at T318. The residue at position 326 (Y326) is a Phosphotyrosine.

Belongs to the protein kinase superfamily. Ser/Thr protein kinase family. In terms of assembly, interacts with ARAC5 and ARAC10. In terms of tissue distribution, mostly expressed in vasculature, hydathode endothem, leaf mesophyll cells and trichomes.

Its subcellular location is the cytoplasm. It localises to the endomembrane system. It is found in the nucleus. The enzyme catalyses L-seryl-[protein] + ATP = O-phospho-L-seryl-[protein] + ADP + H(+). The catalysed reaction is L-threonyl-[protein] + ATP = O-phospho-L-threonyl-[protein] + ADP + H(+). This Arabidopsis thaliana (Mouse-ear cress) protein is Receptor-like cytosolic serine/threonine-protein kinase RBK1 (RBK1).